Reading from the N-terminus, the 233-residue chain is Probable tetraheme cytochrome c-type (233 aa).

Positions 1–28 (MTRLQKGSIGTLLTGALLGIVLVAVVFG) are cleaved as a signal peptide. The heme site is built by Cys-39, Cys-42, Met-45, Cys-67, Cys-70, His-71, Glu-93, Cys-131, Cys-134, His-135, Cys-159, Cys-162, His-163, and His-168. Positions 182–233 (QGKLVLKPEDDGDDEEADEDEDEETEEADDSSDSESASSSDNSDNEDDNNDE) are disordered. Composition is skewed to acidic residues over residues 191–214 (DDGDDEEADEDEDEETEEADDSSD) and 224–233 (SDNEDDNNDE).

This sequence belongs to the NapC/NirT/NrfH family. Post-translationally, binds 4 heme groups per subunit.

It is found in the periplasm. The polypeptide is Probable tetraheme cytochrome c-type (cycX1) (Nitrosomonas europaea (strain ATCC 19718 / CIP 103999 / KCTC 2705 / NBRC 14298)).